The primary structure comprises 299 residues: ATP phosphoribosyltransferase (299 aa).

This sequence belongs to the ATP phosphoribosyltransferase family. Long subfamily. Equilibrium between an active dimeric form, an inactive hexameric form and higher aggregates. Interconversion between the various forms is largely reversible and is influenced by the natural substrates and inhibitors of the enzyme. Requires Mg(2+) as cofactor.

The protein localises to the cytoplasm. The catalysed reaction is 1-(5-phospho-beta-D-ribosyl)-ATP + diphosphate = 5-phospho-alpha-D-ribose 1-diphosphate + ATP. Its pathway is amino-acid biosynthesis; L-histidine biosynthesis; L-histidine from 5-phospho-alpha-D-ribose 1-diphosphate: step 1/9. Its activity is regulated as follows. Feedback inhibited by histidine. Functionally, catalyzes the condensation of ATP and 5-phosphoribose 1-diphosphate to form N'-(5'-phosphoribosyl)-ATP (PR-ATP). Has a crucial role in the pathway because the rate of histidine biosynthesis seems to be controlled primarily by regulation of HisG enzymatic activity. This chain is ATP phosphoribosyltransferase, found in Escherichia coli O17:K52:H18 (strain UMN026 / ExPEC).